The sequence spans 610 residues: Glutamine--fructose-6-phosphate aminotransferase [isomerizing] (610 aa).

The active-site Nucleophile; for GATase activity is the Cys2. The 217-residue stretch at 2–218 (CGIVGAVAQR…EGDVAEITRR (217 aa)) folds into the Glutamine amidotransferase type-2 domain. SIS domains follow at residues 286–426 (AAEI…QQGR) and 459–600 (LATD…VDQP). Lys605 functions as the For Fru-6P isomerization activity in the catalytic mechanism.

In terms of assembly, homodimer.

It is found in the cytoplasm. It carries out the reaction D-fructose 6-phosphate + L-glutamine = D-glucosamine 6-phosphate + L-glutamate. Its function is as follows. Catalyzes the first step in hexosamine metabolism, converting fructose-6P into glucosamine-6P using glutamine as a nitrogen source. This is Glutamine--fructose-6-phosphate aminotransferase [isomerizing] from Vibrio vulnificus (strain YJ016).